A 116-amino-acid chain; its full sequence is Putative iron-sulfur cluster insertion protein ErpA (116 aa).

Iron-sulfur cluster is bound by residues cysteine 44, cysteine 108, and cysteine 110.

Belongs to the HesB/IscA family. As to quaternary structure, homodimer. Requires iron-sulfur cluster as cofactor.

Functionally, required for insertion of 4Fe-4S clusters. This chain is Putative iron-sulfur cluster insertion protein ErpA, found in Janthinobacterium sp. (strain Marseille) (Minibacterium massiliensis).